A 166-amino-acid chain; its full sequence is Cyanate hydratase (166 aa).

Catalysis depends on residues R92, E95, and S118.

This sequence belongs to the cyanase family.

It catalyses the reaction cyanate + hydrogencarbonate + 3 H(+) = NH4(+) + 2 CO2. Catalyzes the reaction of cyanate with bicarbonate to produce ammonia and carbon dioxide. This Sorghum bicolor (Sorghum) protein is Cyanate hydratase.